Consider the following 384-residue polypeptide: uncharacterized protein (384 aa).

Residues 137-303 (EHDAPNRLWQ…VPGSRYQPSA (167 aa)) form the Integrase catalytic domain.

This is an uncharacterized protein from Escherichia coli (strain K12).